Here is a 304-residue protein sequence, read N- to C-terminus: Beta-lactamase AER-1 (304 aa).

The signal sequence occupies residues 1–37; that stretch reads MYVLSVEKPTLRNKFAAGIGVVLVCVVASFIPTPVFA. Serine 83 acts as the Acyl-ester intermediate in catalysis. A disulfide bridge links cysteine 90 with cysteine 137. The interval 173-195 is disordered; sequence ETQLDRKEPELNEGTPGDVRDTT. Residue 248 to 250 coordinates substrate; it reads KTG.

The protein belongs to the class-A beta-lactamase family.

The enzyme catalyses a beta-lactam + H2O = a substituted beta-amino acid. Its function is as follows. Hydrolyzes carbenicillin. Methicillin and oxacillin are weakly hydrolyzed. The chain is Beta-lactamase AER-1 (aer1) from Aeromonas hydrophila.